The chain runs to 345 residues: Platelet-derived growth factor C (345 aa).

Residues methionine 1–alanine 22 form the signal peptide. Asparagine 25 and asparagine 55 each carry an N-linked (GlcNAc...) asparagine glycan. The CUB domain maps to histidine 46–valine 163. 4 disulfides stabilise this stretch: cysteine 104-cysteine 124, cysteine 250-cysteine 294, cysteine 280-cysteine 335, and cysteine 287-cysteine 337.

The protein belongs to the PDGF/VEGF growth factor family. As to quaternary structure, homodimer; disulfide-linked. Interacts with PDGFRA homodimers, and with heterodimers formed by PDGFRA and PDGFRB. Interacts (via CUB domain) with PLAT (via kringle domain). In terms of processing, proteolytic removal of the N-terminal CUB domain releasing the core domain is necessary for unmasking the receptor-binding epitopes of the core domain. Cleavage after basic residues in the hinge region (region connecting the CUB and growth factor domains) gives rise to the receptor-binding form. Cleaved by PLAT and PLG. Sumoylated with SUMO1. Post-translationally, N-glycosylated. Expressed in the fallopian tube, vascular smooth muscle cells in kidney, breast and colon and in visceral smooth muscle of the gastrointestinal tract. Highly expressed in retinal pigment epithelia. Expressed in medulloblastoma. In the kidney, constitutively expressed in parietal epithelial cells of Bowman's capsule, tubular epithelial cells and in arterial endothelial cells (at protein level). Highly expressed in the platelets, prostate, testis and uterus. Higher expression is observed in uterine leiomyomata. Weaker expression in the spleen, thymus, heart, pancreas, liver, ovary cells and small intestine, and negligible expression in the colon and peripheral blood leukocytes.

It localises to the cytoplasm. The protein localises to the cytosol. It is found in the secreted. The protein resides in the nucleus. Its subcellular location is the cytoplasmic granule. It localises to the cell membrane. Growth factor that plays an essential role in the regulation of embryonic development, cell proliferation, cell migration, survival and chemotaxis. Potent mitogen and chemoattractant for cells of mesenchymal origin. Required for normal skeleton formation during embryonic development, especially for normal development of the craniofacial skeleton and for normal development of the palate. Required for normal skin morphogenesis during embryonic development. Plays an important role in wound healing, where it appears to be involved in three stages: inflammation, proliferation and remodeling. Plays an important role in angiogenesis and blood vessel development. Involved in fibrotic processes, in which transformation of interstitial fibroblasts into myofibroblasts plus collagen deposition occurs. The CUB domain has mitogenic activity in coronary artery smooth muscle cells, suggesting a role beyond the maintenance of the latency of the PDGF domain. In the nucleus, PDGFC seems to have additional function. This is Platelet-derived growth factor C (PDGFC) from Homo sapiens (Human).